A 236-amino-acid polypeptide reads, in one-letter code: Uridylate kinase (236 aa).

Residue 8-11 (KLSG) coordinates ATP. A UMP-binding site is contributed by G51. Residues G52 and R56 each coordinate ATP. UMP contacts are provided by residues D71 and 133–140 (TGRPFFTT). ATP contacts are provided by N161, F167, and D170.

This sequence belongs to the UMP kinase family. As to quaternary structure, homohexamer.

Its subcellular location is the cytoplasm. It catalyses the reaction UMP + ATP = UDP + ADP. It functions in the pathway pyrimidine metabolism; CTP biosynthesis via de novo pathway; UDP from UMP (UMPK route): step 1/1. Its activity is regulated as follows. Inhibited by UTP. Its function is as follows. Catalyzes the reversible phosphorylation of UMP to UDP. The sequence is that of Uridylate kinase from Mesomycoplasma hyopneumoniae (strain 232) (Mycoplasma hyopneumoniae).